The primary structure comprises 30 residues: Protein Tat (30 aa).

The tract at residues 1–30 (PLPTTRGNPTGPKESKKEVESKTETDPFAW) is disordered. The Cell attachment site signature appears at 6 to 8 (RGN). Residues 13–30 (KESKKEVESKTETDPFAW) are compositionally biased toward basic and acidic residues.

This sequence belongs to the lentiviruses Tat family. As to quaternary structure, interacts with host CCNT1. Associates with the P-TEFb complex composed at least of Tat, P-TEFb (CDK9 and CCNT1), TAR RNA, RNA Pol II. Recruits the HATs CREBBP, TAF1/TFIID, EP300, PCAF and GCN5L2. Interacts with host KAT5/Tip60; this interaction targets the latter to degradation. Interacts with the host deacetylase SIRT1. Interacts with host capping enzyme RNGTT; this interaction stimulates RNGTT. Binds to host KDR, and to the host integrins ITGAV/ITGB3 and ITGA5/ITGB1. Interacts with host KPNB1/importin beta-1 without previous binding to KPNA1/importin alpha-1. Interacts with EIF2AK2. Interacts with host nucleosome assembly protein NAP1L1; this interaction may be required for the transport of Tat within the nucleus, since the two proteins interact at the nuclear rim. Interacts with host C1QBP/SF2P32; this interaction involves lysine-acetylated Tat. Interacts with the host chemokine receptors CCR2, CCR3 and CXCR4. Interacts with host DPP4/CD26; this interaction may trigger an anti-proliferative effect. Interacts with host LDLR. Interacts with the host extracellular matrix metalloproteinase MMP1. Interacts with host PRMT6; this interaction mediates Tat's methylation. Interacts with, and is ubiquitinated by MDM2/Hdm2. Interacts with host PSMC3 and HTATIP2. Interacts with STAB1; this interaction may overcome SATB1-mediated repression of IL2 and IL2RA (interleukin) in T cells by binding to the same domain than HDAC1. Interacts (when acetylated on Lys-50 and Lys-51) with human CDK13, thereby increasing HIV-1 mRNA splicing and promoting the production of the doubly spliced HIV-1 protein Nef. Acetylation by EP300, CREBBP, GCN5L2/GCN5 and PCAF regulates the transactivation activity of Tat. EP300-mediated acetylation of Lys-50 promotes dissociation of Tat from the TAR RNA through the competitive binding to PCAF's bromodomain. In addition, the non-acetylated Tat's N-terminus can also interact with PCAF. PCAF-mediated acetylation of Lys-28 enhances Tat's binding to CCNT1. Lys-50 is deacetylated by SIRT1. Post-translationally, phosphorylated by EIF2AK2 on serine and threonine residues adjacent to the basic region important for TAR RNA binding and function. Phosphorylation of Tat by EIF2AK2 is dependent on the prior activation of EIF2AK2 by dsRNA. In terms of processing, asymmetrical arginine methylation by host PRMT6 seems to diminish the transactivation capacity of Tat and affects the interaction with host CCNT1. Polyubiquitination by MDM2 does not target Tat to degradation, but activates its transactivation function and fosters interaction with CCNT1 and TAR RNA.

Its subcellular location is the host nucleus. It localises to the host nucleolus. The protein localises to the host cytoplasm. The protein resides in the secreted. Its function is as follows. Transcriptional activator that increases RNA Pol II processivity, thereby increasing the level of full-length viral transcripts. Recognizes a hairpin structure at the 5'-LTR of the nascent viral mRNAs referred to as the transactivation responsive RNA element (TAR) and recruits the cyclin T1-CDK9 complex (P-TEFb complex) that will in turn hyperphosphorylate the RNA polymerase II to allow efficient elongation. The CDK9 component of P-TEFb and other Tat-activated kinases hyperphosphorylate the C-terminus of RNA Pol II that becomes stabilized and much more processive. Other factors such as HTATSF1/Tat-SF1, SUPT5H/SPT5, and HTATIP2 are also important for Tat's function. Besides its effect on RNA Pol II processivity, Tat induces chromatin remodeling of proviral genes by recruiting the histone acetyltransferases (HATs) CREBBP, EP300 and PCAF to the chromatin. This also contributes to the increase in proviral transcription rate, especially when the provirus integrates in transcriptionally silent region of the host genome. To ensure maximal activation of the LTR, Tat mediates nuclear translocation of NF-kappa-B by interacting with host RELA. Through its interaction with host TBP, Tat may also modulate transcription initiation. Tat can reactivate a latently infected cell by penetrating in it and transactivating its LTR promoter. In the cytoplasm, Tat is thought to act as a translational activator of HIV-1 mRNAs. Extracellular circulating Tat can be endocytosed by surrounding uninfected cells via the binding to several surface receptors such as CD26, CXCR4, heparan sulfate proteoglycans (HSPG) or LDLR. Neurons are rarely infected, but they internalize Tat via their LDLR. Endosomal low pH allows Tat to cross the endosome membrane to enter the cytosol and eventually further translocate into the nucleus, thereby inducing severe cell dysfunctions ranging from cell activation to cell death. Through its interaction with nuclear HATs, Tat is potentially able to control the acetylation-dependent cellular gene expression. Tat seems to inhibit the HAT activity of KAT5/Tip60 and TAF1, and consequently modify the expression of specific cellular genes. Modulates the expression of many cellular genes involved in cell survival, proliferation or in coding for cytokines (such as IL10) or cytokine receptors. May be involved in the derepression of host interleukin IL2 expression. Mediates the activation of cyclin-dependent kinases and dysregulation of microtubule network. Tat plays a role in T-cell and neurons apoptosis. Tat induced neurotoxicity and apoptosis probably contribute to neuroAIDS. Host extracellular matrix metalloproteinase MMP1 cleaves Tat and decreases Tat's mediated neurotoxicity. Circulating Tat also acts as a chemokine-like and/or growth factor-like molecule that binds to specific receptors on the surface of the cells, affecting many cellular pathways. In the vascular system, Tat binds to ITGAV/ITGB3 and ITGA5/ITGB1 integrins dimers at the surface of endothelial cells and competes with bFGF for heparin-binding sites, leading to an excess of soluble bFGF. Binds to KDR/VEGFR-2. All these Tat-mediated effects enhance angiogenesis in Kaposi's sarcoma lesions. The sequence is that of Protein Tat from Human immunodeficiency virus type 1 group M subtype A (isolate Z321) (HIV-1).